A 182-amino-acid chain; its full sequence is ATP-dependent protease subunit HslV (182 aa).

Thr10 is an active-site residue. Na(+) is bound by residues Ala166, Cys169, and Ser172.

Belongs to the peptidase T1B family. HslV subfamily. In terms of assembly, a double ring-shaped homohexamer of HslV is capped on each side by a ring-shaped HslU homohexamer. The assembly of the HslU/HslV complex is dependent on binding of ATP.

The protein resides in the cytoplasm. The catalysed reaction is ATP-dependent cleavage of peptide bonds with broad specificity.. Allosterically activated by HslU binding. Its function is as follows. Protease subunit of a proteasome-like degradation complex believed to be a general protein degrading machinery. This is ATP-dependent protease subunit HslV from Rickettsia bellii (strain OSU 85-389).